A 221-amino-acid chain; its full sequence is Serine/arginine-rich splicing factor 2 (221 aa).

Ser-2 carries the N-acetylserine modification. A Phosphoserine modification is found at Ser-2. One can recognise an RRM domain in the interval 14–92; the sequence is TSLKVDNLTY…RELRVQMARY (79 aa). Thr-22 and Thr-25 each carry phosphothreonine. Ser-26 carries the post-translational modification Phosphoserine. Position 52 is an N6-acetyllysine (Lys-52). The interval 92–221 is disordered; that stretch reads YGRPPDSHHS…SPEEEGAVSS (130 aa). Basic residues-rich tracts occupy residues 117-171 and 179-189; these read RRSR…RSKS and SRSRSRSRSRS. Residues Ser-189, Ser-191, Ser-204, Ser-206, Ser-208, Ser-212, and Ser-220 each carry the phosphoserine modification. Residues 212–221 show a composition bias toward acidic residues; sequence SPEEEGAVSS.

Belongs to the splicing factor SR family. In vitro, self-associates and binds SRSF1/SFRS1 (ASF/SF2), SNRP70 and U2AF1 but not U2AF2. Binds SREK1/SFRS12. Interacts with CCNL1 and CCNL2. Interacts with SCAF11. Interacts with ZRSR2/U2AF1-RS2. Interacts with CCDC55 (via C-terminus). Interacts with BRDT. In terms of processing, extensively phosphorylated on serine residues in the RS domain. Phosphorylated by SRPK2 and this causes its redistribution from the nuclear speckle to nucleoplasm and controls cell fate decision in response to cisplatin treatment. KAT5/TIP60 inhibits its phosphorylation by preventing SRPK2 nuclear translocation. Post-translationally, acetylation on Lys-52 by KAT5/TIP60 promotes its proteasomal degradation. This effect is counterbalanced by HDAC6, which positively controls SRSF2 protein level by deacetylating it and preventing its proteasomal degradation.

It is found in the nucleus. It localises to the nucleoplasm. Its subcellular location is the nucleus speckle. Functionally, necessary for the splicing of pre-mRNA. It is required for formation of the earliest ATP-dependent splicing complex and interacts with spliceosomal components bound to both the 5'- and 3'-splice sites during spliceosome assembly. It also is required for ATP-dependent interactions of both U1 and U2 snRNPs with pre-mRNA. Interacts with other spliceosomal components, via the RS domains, to form a bridge between the 5'- and 3'-splice site binding components, U1 snRNP and U2AF. Binds to purine-rich RNA sequences, either 5'-AGSAGAGTA-3' (S=C or G) or 5'-GTTCGAGTA-3'. Can bind to beta-globin mRNA and commit it to the splicing pathway. The phosphorylated form (by SRPK2) is required for cellular apoptosis in response to cisplatin treatment. This Pan troglodytes (Chimpanzee) protein is Serine/arginine-rich splicing factor 2 (SRSF2).